We begin with the raw amino-acid sequence, 3390 residues long: Genome polyprotein (3390 aa).

The interaction with host EXOC1 stretch occupies residues Met-1–Met-15. Residues Met-1–Lys-100 are Cytoplasmic-facing. Residues Leu-37 to Phe-72 form a hydrophobic; homodimerization of capsid protein C region. Positions Thr-101 to Ala-114 are cleaved as a propeptide — ER anchor for the capsid protein C, removed in mature form by serine protease NS3. The chain crosses the membrane as a helical span at residues Thr-101–Thr-118. The Extracellular segment spans residues Ser-119–Arg-243. Asn-183 carries N-linked (GlcNAc...) asparagine; by host glycosylation. The chain crosses the membrane as a helical span at residues His-244 to Gln-264. Position 265 (Lys-265) is a topological domain, cytoplasmic. The chain crosses the membrane as a helical span at residues Val-266 to Thr-280. At Met-281 to Thr-723 the chain is on the extracellular side. Disulfide bonds link Cys-283–Cys-310, Cys-340–Cys-401, Cys-354–Cys-385, and Cys-372–Cys-396. N-linked (GlcNAc...) asparagine; by host glycosylation is present at Asn-347. Residues Asp-378–Gly-391 form a fusion peptide region. Residue Asn-433 is glycosylated (N-linked (GlcNAc...) asparagine; by host). Intrachain disulfides connect Cys-463-Cys-563 and Cys-580-Cys-611. The helical transmembrane segment at Ala-724–Ile-744 threads the bilayer. The Cytoplasmic segment spans residues Gly-745–Asn-750. A helical membrane pass occupies residues Thr-751–Val-771. Topologically, residues Gln-772–Met-1193 are extracellular. 6 cysteine pairs are disulfide-bonded: Cys-777–Cys-788, Cys-828–Cys-916, Cys-952–Cys-996, Cys-1053–Cys-1102, Cys-1064–Cys-1086, and Cys-1085–Cys-1089. Residues Asn-903 and Asn-980 are each glycosylated (N-linked (GlcNAc...) asparagine; by host). 2 N-linked (GlcNAc...) asparagine; by host glycosylation sites follow: Asn-1132 and Asn-1188. The helical transmembrane segment at Gly-1194–Leu-1218 threads the bilayer. The Cytoplasmic portion of the chain corresponds to Arg-1219–Arg-1224. A helical transmembrane segment spans residues Glu-1225–Glu-1243. Topologically, residues Asp-1244–Thr-1267 are lumenal. Residues Tyr-1268–Val-1288 traverse the membrane as a helical segment. Ala-1289 is a topological domain (cytoplasmic). The helical transmembrane segment at Trp-1290–Ser-1308 threads the bilayer. The Lumenal portion of the chain corresponds to Ser-1309–Asp-1315. The chain crosses the membrane as a helical span at residues Trp-1316 to Leu-1336. Residues Lys-1337–Ser-1344 lie on the Cytoplasmic side of the membrane. Residues Trp-1345–Leu-1365 traverse the membrane as a helical segment. The Lumenal portion of the chain corresponds to Arg-1366–Asp-1368. The chain crosses the membrane as a helical span at residues Val-1369–Gly-1389. Over Thr-1390–Lys-1443 the chain is Cytoplasmic. The interacts with and activates NS3 protease stretch occupies residues Val-1396 to Glu-1435. Residues Thr-1444–Trp-1464 constitute an intramembrane region (helical). Over His-1465 to Thr-2146 the chain is Cytoplasmic. The Peptidase S7 domain occupies Ser-1474 to Glu-1651. Active-site charge relay system; for serine protease NS3 activity residues include His-1524, Asp-1548, and Ser-1608. Residues Glu-1654–Glu-1810 form the Helicase ATP-binding domain. Residues Lys-1658–Asn-1661 are important for RNA-binding. Leu-1667–Thr-1674 provides a ligand contact to ATP. The DEAH box signature appears at Asp-1758–His-1761. A Helicase C-terminal domain is found at Gly-1821 to Glu-1986. Residue Lys-1862 is modified to N6-acetyllysine; by host. The chain crosses the membrane as a helical span at residues Leu-2147–Gly-2167. The Lumenal segment spans residues Lys-2168–Gly-2169. Residues Ile-2170–Ala-2190 constitute an intramembrane region (helical). A topological domain (lumenal) is located at residue Asp-2191. A helical transmembrane segment spans residues Val-2192 to Ile-2212. Over Pro-2213–Ala-2227 the chain is Cytoplasmic. Residues Tyr-2228–Leu-2248 form a helical membrane-spanning segment. Topologically, residues Glu-2249 to Asp-2273 are lumenal. Residues Leu-2274 to Leu-2294 constitute an intramembrane region (helical). At Arg-2295–Val-2305 the chain is on the lumenal side. Asn-2300 and Asn-2304 each carry an N-linked (GlcNAc...) asparagine; by host glycan. The helical intramembrane region spans Ser-2306–Ile-2326. Residues Ser-2327 to Pro-2346 are Lumenal-facing. A helical transmembrane segment spans residues Leu-2347–Leu-2367. The Cytoplasmic segment spans residues Gln-2368–Gln-2412. The chain crosses the membrane as a helical span at residues Val-2413–Cys-2433. The Lumenal segment spans residues Glu-2434–Thr-2458. N-linked (GlcNAc...) asparagine; by host glycosylation is present at Asn-2456. A helical transmembrane segment spans residues Ile-2459 to Leu-2479. The Cytoplasmic portion of the chain corresponds to Ser-2480–Trp-3390. One can recognise an mRNA cap 0-1 NS5-type MT domain in the interval Thr-2492–His-2753. Ser-2546 contributes to the S-adenosyl-L-methionine binding site. Phosphoserine is present on Ser-2546. Lys-2551 functions as the For 2'-O-MTase activity in the catalytic mechanism. The short motif at Val-2567–Leu-2570 is the SUMO-interacting motif element. S-adenosyl-L-methionine contacts are provided by Gly-2576, Trp-2577, Thr-2594, Lys-2595, Asp-2621, and Val-2622. The For 2'-O-MTase activity role is filled by Asp-2636. An S-adenosyl-L-methionine-binding site is contributed by Ile-2637. Active-site for 2'-O-MTase activity residues include Lys-2670 and Glu-2706. Tyr-2708 contributes to the S-adenosyl-L-methionine binding site. 4 residues coordinate Zn(2+): Glu-2927, His-2931, Cys-2936, and Cys-2939. Residues Ala-3018–Leu-3168 enclose the RdRp catalytic domain. Residues His-3202, Cys-3218, and Cys-3337 each contribute to the Zn(2+) site.

In the N-terminal section; belongs to the class I-like SAM-binding methyltransferase superfamily. mRNA cap 0-1 NS5-type methyltransferase family. Homodimer. Interacts (via N-terminus) with host EXOC1 (via C-terminus); this interaction results in EXOC1 degradation through the proteasome degradation pathway. In terms of assembly, forms heterodimers with envelope protein E in the endoplasmic reticulum and Golgi. As to quaternary structure, homodimer; in the endoplasmic reticulum and Golgi. Interacts with protein prM. Interacts with non-structural protein 1. Homodimer; Homohexamer when secreted. Interacts with envelope protein E. In terms of assembly, interacts (via N-terminus) with serine protease NS3. As to quaternary structure, forms a heterodimer with serine protease NS3. May form homooligomers. Forms a heterodimer with NS2B. Interacts with NS4B. Interacts with unphosphorylated RNA-directed RNA polymerase NS5; this interaction stimulates RNA-directed RNA polymerase NS5 guanylyltransferase activity. Interacts with host SHFL. In terms of assembly, interacts with host MAVS; this interaction inhibits the synthesis of IFN-beta. Interacts with host SHFL. Interacts with host AUP1; the interaction occurs in the presence of Dengue virus NS4B and induces lipophagy which facilitates production of virus progeny particles. As to quaternary structure, interacts with serine protease NS3. Homodimer. Interacts with host STAT2; this interaction inhibits the phosphorylation of the latter, and, when all viral proteins are present (polyprotein), targets STAT2 for degradation. Interacts with serine protease NS3. Specific enzymatic cleavages in vivo yield mature proteins. Cleavages in the lumen of endoplasmic reticulum are performed by host signal peptidase, whereas cleavages in the cytoplasmic side are performed by serine protease NS3. Signal cleavage at the 2K-4B site requires a prior NS3 protease-mediated cleavage at the 4A-2K site. In terms of processing, cleaved in post-Golgi vesicles by a host furin, releasing the mature small envelope protein M, and peptide pr. This cleavage is incomplete as up to 30% of viral particles still carry uncleaved prM. Post-translationally, N-glycosylated. N-glycosylated. The excreted form is glycosylated and this is required for efficient secretion of the protein from infected cells. In terms of processing, acetylated by host KAT5. Acetylation modulates NS3 RNA-binding and unwinding activities and plays an important positive role for viral replication. Post-translationally, sumoylation of RNA-directed RNA polymerase NS5 increases NS5 protein stability allowing proper viral RNA replication. Phosphorylated on serines residues. This phosphorylation may trigger NS5 nuclear localization.

It localises to the virion. The protein localises to the host nucleus. It is found in the host cytoplasm. The protein resides in the host perinuclear region. Its subcellular location is the secreted. It localises to the virion membrane. The protein localises to the host endoplasmic reticulum membrane. It is found in the host mitochondrion. The enzyme catalyses Selective hydrolysis of -Xaa-Xaa-|-Yaa- bonds in which each of the Xaa can be either Arg or Lys and Yaa can be either Ser or Ala.. It carries out the reaction RNA(n) + a ribonucleoside 5'-triphosphate = RNA(n+1) + diphosphate. The catalysed reaction is a ribonucleoside 5'-triphosphate + H2O = a ribonucleoside 5'-diphosphate + phosphate + H(+). It catalyses the reaction ATP + H2O = ADP + phosphate + H(+). The enzyme catalyses a 5'-end (5'-triphosphoguanosine)-ribonucleoside in mRNA + S-adenosyl-L-methionine = a 5'-end (N(7)-methyl 5'-triphosphoguanosine)-ribonucleoside in mRNA + S-adenosyl-L-homocysteine. It carries out the reaction a 5'-end (N(7)-methyl 5'-triphosphoguanosine)-ribonucleoside in mRNA + S-adenosyl-L-methionine = a 5'-end (N(7)-methyl 5'-triphosphoguanosine)-(2'-O-methyl-ribonucleoside) in mRNA + S-adenosyl-L-homocysteine + H(+). In terms of biological role, plays a role in virus budding by binding to the cell membrane and gathering the viral RNA into a nucleocapsid that forms the core of a mature virus particle. During virus entry, may induce genome penetration into the host cytoplasm after hemifusion induced by the surface proteins. Can migrate to the cell nucleus where it modulates host functions. Overcomes the anti-viral effects of host EXOC1 by sequestering and degrading the latter through the proteasome degradation pathway. Its function is as follows. Inhibits RNA silencing by interfering with host Dicer. Functionally, prevents premature fusion activity of envelope proteins in trans-Golgi by binding to envelope protein E at pH6.0. After virion release in extracellular space, gets dissociated from E dimers. Acts as a chaperone for envelope protein E during intracellular virion assembly by masking and inactivating envelope protein E fusion peptide. prM is the only viral peptide matured by host furin in the trans-Golgi network probably to avoid catastrophic activation of the viral fusion activity in acidic Golgi compartment prior to virion release. prM-E cleavage is inefficient, and many virions are only partially matured. These uncleaved prM would play a role in immune evasion. In terms of biological role, may play a role in virus budding. Exerts cytotoxic effects by activating a mitochondrial apoptotic pathway through M ectodomain. May display a viroporin activity. Its function is as follows. Binds to host cell surface receptor and mediates fusion between viral and cellular membranes. Envelope protein is synthesized in the endoplasmic reticulum in the form of heterodimer with protein prM. They play a role in virion budding in the ER, and the newly formed immature particle is covered with 60 spikes composed of heterodimer between precursor prM and envelope protein E. The virion is transported to the Golgi apparatus where the low pH causes dissociation of PrM-E heterodimers and formation of E homodimers. prM-E cleavage is inefficient, and many virions are only partially matured. These uncleaved prM would play a role in immune evasion. Functionally, involved in immune evasion, pathogenesis and viral replication. Once cleaved off the polyprotein, is targeted to three destinations: the viral replication cycle, the plasma membrane and the extracellular compartment. Essential for viral replication. Required for formation of the replication complex and recruitment of other non-structural proteins to the ER-derived membrane structures. Excreted as a hexameric lipoparticle that plays a role against host immune response. Antagonizing the complement function. Binds to the host macrophages and dendritic cells. Inhibits signal transduction originating from Toll-like receptor 3 (TLR3). Disrupts the host endothelial glycocalyx layer of host pulmonary microvascular endothelial cells, inducing degradation of sialic acid and shedding of heparan sulfate proteoglycans. NS1 induces expression of sialidases, heparanase, and activates cathepsin L, which activates heparanase via enzymatic cleavage. These effects are probably linked to the endothelial hyperpermeability observed in severe dengue disease. In terms of biological role, component of the viral RNA replication complex that functions in virion assembly and antagonizes the host immune response. Its function is as follows. Required cofactor for the serine protease function of NS3. May have membrane-destabilizing activity and form viroporins. Functionally, displays three enzymatic activities: serine protease, NTPase and RNA helicase. NS3 serine protease, in association with NS2B, performs its autocleavage and cleaves the polyprotein at dibasic sites in the cytoplasm: C-prM, NS2A-NS2B, NS2B-NS3, NS3-NS4A, NS4A-2K and NS4B-NS5. NS3 RNA helicase binds RNA and unwinds dsRNA in the 3' to 5' direction. Regulates the ATPase activity of the NS3 helicase activity. NS4A allows NS3 helicase to conserve energy during unwinding. Plays a role in the inhibition of the host innate immune response. Interacts with host MAVS and thereby prevents the interaction between RIGI and MAVS. In turn, IFN-beta production is impaired. Interacts with host AUP1 which mediates induction of lipophagy in host cells and facilitates production of virus progeny particles. In terms of biological role, functions as a signal peptide for NS4B and is required for the interferon antagonism activity of the latter. Its function is as follows. Induces the formation of ER-derived membrane vesicles where the viral replication takes place. Inhibits interferon (IFN)-induced host STAT1 phosphorylation and nuclear translocation, thereby preventing the establishment of cellular antiviral state by blocking the IFN-alpha/beta pathway. Functionally, replicates the viral (+) and (-) RNA genome, and performs the capping of genomes in the cytoplasm. NS5 methylates viral RNA cap at guanine N-7 and ribose 2'-O positions. Besides its role in RNA genome replication, also prevents the establishment of cellular antiviral state by blocking the interferon-alpha/beta (IFN-alpha/beta) signaling pathway. Inhibits host TYK2 and STAT2 phosphorylation, thereby preventing activation of JAK-STAT signaling pathway. The sequence is that of Genome polyprotein from Dengue virus type 3 (strain Philippines/H87/1956) (DENV-3).